Reading from the N-terminus, the 237-residue chain is NADH-ubiquinone oxidoreductase assembly factor N7BML (237 aa).

Basic and acidic residues predominate over residues 214-223 (VEKERDDSGK). Positions 214–237 (VEKERDDSGKPAEWTPKAAVRRRG) are disordered.

The protein belongs to the complex I NDUFA12 subunit family.

The protein resides in the mitochondrion. Functionally, acts as an assembly factor of mitochondrial complex I. In Yarrowia lipolytica (strain CLIB 122 / E 150) (Yeast), this protein is NADH-ubiquinone oxidoreductase assembly factor N7BML.